Reading from the N-terminus, the 650-residue chain is DNA gyrase subunit B (650 aa).

The region spanning 429–543 (NELFIVEGDS…AGYVYIAQPP (115 aa)) is the Toprim domain. Glu-435, Asp-508, and Asp-510 together coordinate Mg(2+).

The protein belongs to the type II topoisomerase GyrB family. As to quaternary structure, heterotetramer, composed of two GyrA and two GyrB chains. In the heterotetramer, GyrA contains the active site tyrosine that forms a transient covalent intermediate with DNA, while GyrB binds cofactors and catalyzes ATP hydrolysis. It depends on Mg(2+) as a cofactor. Mn(2+) is required as a cofactor. The cofactor is Ca(2+).

The protein resides in the cytoplasm. It carries out the reaction ATP-dependent breakage, passage and rejoining of double-stranded DNA.. In terms of biological role, a type II topoisomerase that negatively supercoils closed circular double-stranded (ds) DNA in an ATP-dependent manner to modulate DNA topology and maintain chromosomes in an underwound state. Negative supercoiling favors strand separation, and DNA replication, transcription, recombination and repair, all of which involve strand separation. Also able to catalyze the interconversion of other topological isomers of dsDNA rings, including catenanes and knotted rings. Type II topoisomerases break and join 2 DNA strands simultaneously in an ATP-dependent manner. The chain is DNA gyrase subunit B from Streptococcus pyogenes serotype M18 (strain MGAS8232).